The chain runs to 189 residues: 3-hydroxyanthranilate 3,4-dioxygenase (189 aa).

Arginine 49 contributes to the O2 binding site. Positions 53, 59, and 97 each coordinate Fe cation. Glutamate 59 serves as a coordination point for substrate. Positions 101 and 112 each coordinate substrate. Cysteine 127, cysteine 130, cysteine 165, and cysteine 168 together coordinate Fe cation.

Belongs to the 3-HAO family. As to quaternary structure, homodimer. Fe(2+) serves as cofactor.

The enzyme catalyses 3-hydroxyanthranilate + O2 = (2Z,4Z)-2-amino-3-carboxymuconate 6-semialdehyde. It functions in the pathway cofactor biosynthesis; NAD(+) biosynthesis; quinolinate from L-kynurenine: step 3/3. Catalyzes the oxidative ring opening of 3-hydroxyanthranilate to 2-amino-3-carboxymuconate semialdehyde, which spontaneously cyclizes to quinolinate. The sequence is that of 3-hydroxyanthranilate 3,4-dioxygenase from Cupriavidus pinatubonensis (strain JMP 134 / LMG 1197) (Cupriavidus necator (strain JMP 134)).